We begin with the raw amino-acid sequence, 246 residues long: MTDRDTLFSAPIASLGDWTFDERVAEVFPDMIQRSVPGYSNIISMIGMLAERFVQPGTQVYDLGCSLGAATLSVRRNVHHQGCKIIAVDNSPAMVERCRRHLDAYKAPTPVDVIEGDIRTIEIKNASMVVLNFTLQFLEPDNRQLLLDKIYQGLNPGGALVLSEKFSFEDASVGELLFNMHHDFKRANGYSELEISQKRSMLENVMLTDSVEAHKARLHKAGFEHSELWFQCFNFGSLVALKGGQA.

Residues Tyr-39, 64–66 (GCS), 89–90 (DN), 117–118 (DI), Asn-132, and Arg-199 each bind S-adenosyl-L-methionine.

This sequence belongs to the class I-like SAM-binding methyltransferase superfamily. Cx-SAM synthase family. As to quaternary structure, homodimer.

It catalyses the reaction prephenate + S-adenosyl-L-methionine = carboxy-S-adenosyl-L-methionine + 3-phenylpyruvate + H2O. Functionally, catalyzes the conversion of S-adenosyl-L-methionine (SAM) to carboxy-S-adenosyl-L-methionine (Cx-SAM). This Enterobacter sp. (strain 638) protein is Carboxy-S-adenosyl-L-methionine synthase.